The sequence spans 239 residues: Probable GTP-binding protein EngB (239 aa).

An EngB-type G domain is found at 23 to 219 (QVPEIAFAGR…NDKILELLGL (197 aa)). GTP is bound by residues 31–38 (GRSNAGKS), 58–62 (GRTQH), 92–95 (DLPG), 159–162 (TKSD), and 193–200 (FTAQLFSA). Residues serine 38 and threonine 60 each contribute to the Mg(2+) site.

The protein belongs to the TRAFAC class TrmE-Era-EngA-EngB-Septin-like GTPase superfamily. EngB GTPase family. Mg(2+) is required as a cofactor.

Necessary for normal cell division and for the maintenance of normal septation. In Herminiimonas arsenicoxydans, this protein is Probable GTP-binding protein EngB.